The following is a 172-amino-acid chain: Adenine phosphoribosyltransferase (172 aa).

This sequence belongs to the purine/pyrimidine phosphoribosyltransferase family. In terms of assembly, homodimer.

Its subcellular location is the cytoplasm. The enzyme catalyses AMP + diphosphate = 5-phospho-alpha-D-ribose 1-diphosphate + adenine. Its pathway is purine metabolism; AMP biosynthesis via salvage pathway; AMP from adenine: step 1/1. Its function is as follows. Catalyzes a salvage reaction resulting in the formation of AMP, that is energically less costly than de novo synthesis. In Streptococcus agalactiae serotype Ia (strain ATCC 27591 / A909 / CDC SS700), this protein is Adenine phosphoribosyltransferase.